We begin with the raw amino-acid sequence, 52 residues long: Rubredoxin (52 aa).

The 51-residue stretch at 1 to 51 (MDKYECSICGYIYDEAEGDDGNVAAGTKFADLPADWVCPTCGADKDAFVKM) folds into the Rubredoxin-like domain. The Fe cation site is built by Cys6, Cys9, Cys38, and Cys41.

It belongs to the rubredoxin family. Requires Fe(3+) as cofactor.

In terms of biological role, rubredoxin is a small nonheme, iron protein lacking acid-labile sulfide. Its single Fe, chelated to 4 Cys, functions as an electron acceptor and may also stabilize the conformation of the molecule. This Megasphaera elsdenii protein is Rubredoxin.